A 164-amino-acid polypeptide reads, in one-letter code: Peptidyl-prolyl cis-trans isomerase A (164 aa).

The residue at position 1 (Met1) is an N-acetylmethionine. Val2 is subject to N-acetylvaline; in Peptidyl-prolyl cis-trans isomerase A, N-terminally processed. The 157-residue stretch at 7–163 folds into the PPIase cyclophilin-type domain; that stretch reads FFDIAVDGEP…KKITIADCGQ (157 aa). Lys28 bears the N6-acetyllysine; alternate mark. Residue Lys28 forms a Glycyl lysine isopeptide (Lys-Gly) (interchain with G-Cter in SUMO2); alternate linkage. Lys28 participates in a covalent cross-link: Glycyl lysine isopeptide (Lys-Gly) (interchain with G-Cter in ubiquitin); alternate. Residues Lys44 and Lys76 each carry the N6-acetyllysine modification. Cys62 and Cys161 form a disulfide bridge. The residue at position 77 (Ser77) is a Phosphoserine. An N6-acetyllysine; alternate modification is found at Lys82. A Glycyl lysine isopeptide (Lys-Gly) (interchain with G-Cter in SUMO2); alternate cross-link involves residue Lys82. Residue Thr93 is modified to Phosphothreonine. Residue Asn108 is glycosylated (N-linked (GlcNAc...) asparagine). Lys125, Lys131, and Lys133 each carry N6-acetyllysine.

This sequence belongs to the cyclophilin-type PPIase family. PPIase A subfamily. Interacts with protein phosphatase PPP3CA/calcineurin A. Interacts with isoform 2 of BSG/CD147. Interacts with FOXO1; the interaction promotes FOXO1 dephosphorylation, nuclear accumulation and transcriptional activity. Interacts with integrin ITGA2B:ITGB3; the interaction is ROS and peptidyl-prolyl cis-trans isomerase (PPIase) activity-dependent and is increased in the presence of thrombin. Interacts with MAP3K5. Interacts with TARDBP; the interaction is dependent on the RNA-binding activity of TARDBP and the PPIase activity of PPIA/CYPA and the acetylation of PPIA/CYPA at Lys-125 favors the interaction. Interacts with HNRNPA1, HNRNPA2B1, HNRNPC, RBMX, HNRNPK and HNRNPM. In terms of processing, acetylation at Lys-125 markedly inhibits catalysis of cis to trans isomerization. PPIA acetylation also antagonizes the immunosuppressive effects of cyclosporine by inhibiting the sequential steps of cyclosporine binding and calcineurin inhibition. Acetylation at Lys-125 favors the interaction with TARDBP.

It is found in the cytoplasm. It localises to the secreted. Its subcellular location is the nucleus. It carries out the reaction [protein]-peptidylproline (omega=180) = [protein]-peptidylproline (omega=0). Binds cyclosporin A (CsA). CsA mediates some of its effects via an inhibitory action on PPIase. Its function is as follows. Catalyzes the cis-trans isomerization of proline imidic peptide bonds in oligopeptides. Exerts a strong chemotactic effect on leukocytes partly through activation of one of its membrane receptors BSG/CD147, initiating a signaling cascade that culminates in MAPK/ERK activation. Activates endothelial cells (ECs) in a proinflammatory manner by stimulating activation of NF-kappa-B and ERK, JNK and p38 MAP-kinases and by inducing expression of adhesion molecules including SELE and VCAM1. Induces apoptosis in ECs by promoting the FOXO1-dependent expression of CCL2 and BCL2L11 which are involved in EC chemotaxis and apoptosis. In response to oxidative stress, initiates proapoptotic and antiapoptotic signaling in ECs via activation of NF-kappa-B and AKT1 and up-regulation of antiapoptotic protein BCL2. Negatively regulates MAP3K5/ASK1 kinase activity, autophosphorylation and oxidative stress-induced apoptosis mediated by MAP3K5/ASK1. Necessary for the assembly of TARDBP in heterogeneous nuclear ribonucleoprotein (hnRNP) complexes and regulates TARDBP binding to RNA UG repeats and TARDBP-dependent expression of HDAC6, ATG7 and VCP which are involved in clearance of protein aggregates. Plays an important role in platelet activation and aggregation. Regulates calcium mobilization and integrin ITGA2B:ITGB3 bidirectional signaling via increased ROS production as well as by facilitating the interaction between integrin and the cell cytoskeleton. Binds heparan sulfate glycosaminoglycans. This Bos taurus (Bovine) protein is Peptidyl-prolyl cis-trans isomerase A (PPIA).